A 362-amino-acid polypeptide reads, in one-letter code: Anthranilate phosphoribosyltransferase 2 (362 aa).

5-phospho-alpha-D-ribose 1-diphosphate contacts are provided by residues G103, 106–107 (GD), T111, 113–116 (NIST), 131–139 (KHGNRSASS), and S143. An anthranilate-binding site is contributed by G103. S115 contacts Mg(2+). An anthranilate-binding site is contributed by N134. R189 is an anthranilate binding site. The Mg(2+) site is built by D248 and E249.

The protein belongs to the anthranilate phosphoribosyltransferase family. As to quaternary structure, homodimer. The cofactor is Mg(2+).

The enzyme catalyses N-(5-phospho-beta-D-ribosyl)anthranilate + diphosphate = 5-phospho-alpha-D-ribose 1-diphosphate + anthranilate. It participates in amino-acid biosynthesis; L-tryptophan biosynthesis; L-tryptophan from chorismate: step 2/5. Functionally, catalyzes the transfer of the phosphoribosyl group of 5-phosphorylribose-1-pyrophosphate (PRPP) to anthranilate to yield N-(5'-phosphoribosyl)-anthranilate (PRA). The protein is Anthranilate phosphoribosyltransferase 2 of Nostoc sp. (strain PCC 7120 / SAG 25.82 / UTEX 2576).